Reading from the N-terminus, the 352-residue chain is C-C chemokine receptor type 5 (352 aa).

Over 1 to 30 (MDYQVSSPTYDIDYYTSEPCQKVNVKQIAA) the chain is Extracellular. Tyrosine 3 bears the Sulfotyrosine mark. O-linked (GalNAc...) serine glycosylation is found at serine 6 and serine 7. Residues tyrosine 10, tyrosine 14, and tyrosine 15 each carry the sulfotyrosine modification. Cystine bridges form between cysteine 20–cysteine 269 and cysteine 101–cysteine 178. A helical transmembrane segment spans residues 31 to 58 (RLLPPLYSLVFIFGFVGNILVVLILINC). The Cytoplasmic portion of the chain corresponds to 59-68 (KRLKSMTDIY). The helical transmembrane segment at 69-89 (LLNLAISDLFFLLTVPFWAHY) threads the bilayer. Residues 90–102 (AAAQWDFGNTMCQ) are Extracellular-facing. The chain crosses the membrane as a helical span at residues 103–124 (LLTGLYFIGFFSGIFFIILLTI). The Cytoplasmic portion of the chain corresponds to 125 to 141 (DRYLAIVHAVFALKART). Residues 142–166 (VTFGVVTSVITWVVAVFASLPGIIF) form a helical membrane-spanning segment. Residues 167–198 (TRSQREGLHYTCSSHFPYSQYQFWKNFQTLKI) are Extracellular-facing. Residues 199 to 218 (VILGLVLPLLVMVICYSGIL) form a helical membrane-spanning segment. The Cytoplasmic segment spans residues 219 to 235 (KTLLRCRNEKKRHRAVR). Residues 236–260 (LIFTIMIVYFLFWAPYNIVLLLNTF) form a helical membrane-spanning segment. The Extracellular segment spans residues 261-277 (QEFFGLNNCSSSNRLDQ). The helical transmembrane segment at 278-301 (AMQVTETLGMTHCCINPIIYAFVG) threads the bilayer. The Cytoplasmic portion of the chain corresponds to 302 to 352 (EKFRNYLLVFFQKHIAKRFCKCCRIFQQEAPERASSVYTRSTGEQEISVGL). Residues cysteine 321, cysteine 323, and cysteine 324 are each lipidated (S-palmitoyl cysteine). Residues serine 336, serine 337, serine 342, and serine 349 each carry the phosphoserine; by BARK1 modification.

The protein belongs to the G-protein coupled receptor 1 family. In terms of assembly, interacts with PRAF2. Efficient ligand binding to CCL3/MIP-1alpha and CCL4/MIP-1beta requires sulfation, O-glycosylation and sialic acid modifications. Glycosylation on Ser-6 is required for efficient binding of CCL4. Interacts with GRK2. Interacts with ARRB1 and ARRB2. Interacts with CNIH4. Interacts with S100A4; this interaction stimulates T-lymphocyte chemotaxis. Sulfated on at least 2 of the N-terminal tyrosines. Sulfation is required for efficient binding of the chemokines, CCL3 and CCL4. In terms of processing, palmitoylation in the C-terminal is important for cell surface expression. Post-translationally, phosphorylation on serine residues in the C-terminal is stimulated by binding CC chemokines especially by APO-RANTES. O-glycosylated, but not N-glycosylated. Ser-6 appears to be the major site even if Ser-7 may be also O-glycosylated. Also sialylated glycans present which contribute to chemokine binding. Thr-16 and Ser-17 may also be glycosylated and, if so, with small moieties such as a T-antigen.

Its subcellular location is the cell membrane. Its function is as follows. Receptor for a number of inflammatory CC-chemokines including CCL3/MIP-1-alpha, CCL4/MIP-1-beta and RANTES and subsequently transduces a signal by increasing the intracellular calcium ion level. May play a role in the control of granulocytic lineage proliferation or differentiation. Participates in T-lymphocyte migration to the infection site by acting as a chemotactic receptor. The chain is C-C chemokine receptor type 5 (CCR5) from Colobus polykomos (Western black-and-white colobus monkey).